We begin with the raw amino-acid sequence, 325 residues long: Small ribosomal subunit protein RACK1 (325 aa).

WD repeat units lie at residues 5 to 48, 58 to 99, 100 to 141, 143 to 186, 187 to 227, 228 to 268, and 269 to 320; these read QMKL…WDVD, IGRP…WDLN, QGVS…WNTL, QCKY…WNLG, NCRL…LWDL, NEGK…WDLE, and DKKE…YQVS.

Belongs to the WD repeat G protein beta family. Ribosomal protein RACK1 subfamily.

Its function is as follows. Required for the expression of antimicrobial peptide nlp-29 in response to fungal infection or physical injury. The polypeptide is Small ribosomal subunit protein RACK1 (rack-1) (Caenorhabditis elegans).